A 185-amino-acid polypeptide reads, in one-letter code: Ubiquitin-fold modifier-conjugating enzyme 1 (185 aa).

Cys119 serves as the catalytic Glycyl thioester intermediate.

This sequence belongs to the ubiquitin-conjugating enzyme family. UFC1 subfamily.

Functionally, E2-like enzyme which forms an intermediate with UFM1 via a thioester linkage. The protein is Ubiquitin-fold modifier-conjugating enzyme 1 of Oryza sativa subsp. japonica (Rice).